The following is a 910-amino-acid chain: MDTAEEDICRVCRSEGTPEKPLYHPCVCTGSIKFIHQECLVQWLKHSRKEYCELCKHRFAFTPIYSPDMPSRLPIQDIFAGLVTSIGTAIRYWFHYTLVAFAWLGVVPLTACRIYKCLFTGSVSSLLTLPLDMLSTENLLADCLQGCFVVTCTLCAFISLVWLREQIVHGGAPIWLEHAAPPFNAAGHHQNEAPAGGNGAENVAADQPANPPAENAVVGENPDAQDDQAEEEEEDNEEEDDAGVEDAADANNGAQDDMNWNALEWDRAAEELTWERMLGLDGSLVFLEHVFWVVSLNTLFILVFAFCPYHIGHFSLVGLGFEEHVQASHFEGLITTIVGYILLAITLIICHGLATLVKFHRSRRLLGVCYIVVKVSLLVVVEIGVFPLICGWWLDICSLEMFDATLKDRELSFQSAPGTTMFLHWLVGMVYVFYFASFILLLREVLRPGVLWFLRNLNDPDFNPVQEMIHLPIYRHLRRFILSVIVFGSIVLLMLWLPIRIIKSVLPNFLPYNVMLYSDAPVSELSLELLLLQVVLPALLEQGHTRQWLKGLVRAWTVTAGYLLDLHSYLLGDQEENENSANQQVNNNQHARNNNAIPVVGEGLHAAHQAILQQGGPVGFQPYRRPLNFPLRIFLLIVFMCITLLIASLICLTLPVFAGRWLMSFWTGTAKIHELYTAACGLYVCWLTIRAVTVMVAWMPQGRRVIFQKVKEWSLMIMKTLIVAVLLAGVVPLLLGLLFELVIVAPLRVPLDQTPLFYPWQDWALGVLHAKIIAAITLMGPQWWLKTVIEQVYANGIRNIDLHYIVRKLAAPVISVLLLSLCVPYVIASGVVPLLGVTAEMQNLVHRRIYPFLLMVVVLMAILSFQVRQFKRLYEHIKNDKYLVGQRLVNYERKSGKQGSSPPPPQSSQE.

Met1 carries the N-acetylmethionine modification. The RING-CH-type zinc-finger motif lies at Met1–Thr62. The Cytoplasmic portion of the chain corresponds to Met1–Arg91. Residues Cys9, Cys12, Cys26, Cys28, His36, Cys39, Cys52, and Cys55 each coordinate Zn(2+). The chain crosses the membrane as a helical span at residues Tyr92–Cys112. Residues Arg113 to Asp142 are Extracellular-facing. The chain crosses the membrane as a helical span at residues Cys143–Leu163. The Cytoplasmic segment spans residues Arg164–Ser283. The disordered stretch occupies residues Ala185–Asp256. Residues Asp223–Ala248 show a composition bias toward acidic residues. Residues Leu284 to Phe304 form a helical membrane-spanning segment. Residues Ala305 to Thr336 lie on the Extracellular side of the membrane. The chain crosses the membrane as a helical span at residues Ile337–Val357. Topologically, residues Lys358 to Ser376 are cytoplasmic. A helical transmembrane segment spans residues Leu377–Cys397. Over Ser398–Met421 the chain is Extracellular. The chain crosses the membrane as a helical span at residues Phe422–Leu442. Topologically, residues Arg443–Phe480 are cytoplasmic. A helical membrane pass occupies residues Ile481 to Ile501. The Extracellular portion of the chain corresponds to Ile502–Asp519. Residues Ala520–Leu540 traverse the membrane as a helical segment. Residues Glu541–Arg632 are Cytoplasmic-facing. Residues Ile633–Thr653 traverse the membrane as a helical segment. Residues Leu654–Ala678 lie on the Extracellular side of the membrane. A helical membrane pass occupies residues Ala679–Met699. The Cytoplasmic segment spans residues Pro700 to Leu721. Residues Ile722–Val742 traverse the membrane as a helical segment. Residues Ile743–Ala764 lie on the Extracellular side of the membrane. Residues Leu765–Leu785 traverse the membrane as a helical segment. At Lys786–Ser815 the chain is on the cytoplasmic side. A helical transmembrane segment spans residues Val816 to Gly836. At Val837–Arg848 the chain is on the extracellular side. A helical transmembrane segment spans residues Ile849 to Gln869. The Cytoplasmic portion of the chain corresponds to Phe870 to Glu910.

In terms of assembly, interacts with DIO2. Interacts with SQLE. In terms of processing, auto-ubiquitinated, which results in proteasomal degradation. Deubiquitinated by USP19; protecting MARCHF6 from p97-mediated proteasomal degradation. As to expression, present in brain (at protein level).

It localises to the endoplasmic reticulum membrane. The catalysed reaction is S-ubiquitinyl-[E2 ubiquitin-conjugating enzyme]-L-cysteine + [acceptor protein]-L-lysine = [E2 ubiquitin-conjugating enzyme]-L-cysteine + N(6)-ubiquitinyl-[acceptor protein]-L-lysine.. The protein operates within protein modification; protein ubiquitination. Functionally, endoplasmic reticulum membrane-associated E3 ubiquitin ligase that plays a critical role in mitigating endoplasmic reticulum stress, the regulation of cholesterol and lipid homeostasis, and ferroptosis. Acts as a pivotal component of both the Ac/N-degron pathway (targeting the N-terminal acetyl group of substrates) and the ER-associated protein degradation-cytosol (ERAD-C) pathway (targeting misfolded substrates). For instance, mediates the degradation of Ac/N-degron-bearing proteins such as the G-protein regulator RGS2 and the lipid droplet protein PLIN2. Suppresses endoplasmic reticulum stress and ferroptosis through cytosolic POMC degradation. Prevents ferroptosis by acting as a NADPH sensor during lipid peroxidation through its C-terminal regulatory region. Facilitates also the degradation of selected endoplasmic reticulum proteins by associating with signal peptide peptidase for the turnover of endogenous tail-anchored proteins. Promotes ubiquitination of DIO2, leading to its degradation. By ubiquitinating and thereby modulating the stability of many proteins of the cholesterol pathway including SQLE, CYP51A1, CYP11A1 and HMGCR, acts as a crucial post-translational regulator of cholesterol synthesis. This chain is E3 ubiquitin-protein ligase MARCHF6, found in Homo sapiens (Human).